Consider the following 278-residue polypeptide: Checkpoint protein Hus1-like (278 aa).

The protein belongs to the HUS1 family. As to quaternary structure, component of the 9-1-1 checkpoint clamp complex consisting of Rad9 isoform A, Rad1 and Hus1-like; the interactions with Rad1 and Rad9 are direct. This complex probably also forms with Rad9 isoform B, however 9-1-1 complex containing Rad9 isoform A localizes to the nuclear periphery. Expressed in ovary.

The protein resides in the cytoplasm. It is found in the nucleus envelope. Functionally, component of the 9-1-1 checkpoint clamp complex. Involved in both meiotic and somatic DNA damage responses. Essential for activation of the meiotic checkpoint in response to double-strand DNA breaks; required for the S-phase checkpoint but not the G2-M phase checkpoint. Involved in double strand break repair by homologous recombination during meiosis; influences the organization of chromosomal DNA in the meiotic nucleus. This Drosophila melanogaster (Fruit fly) protein is Checkpoint protein Hus1-like.